We begin with the raw amino-acid sequence, 300 residues long: 4-hydroxy-tetrahydrodipicolinate synthase (300 aa).

Thr-45 is a binding site for pyruvate. Tyr-140 functions as the Proton donor/acceptor in the catalytic mechanism. Lys-169 functions as the Schiff-base intermediate with substrate in the catalytic mechanism. Val-210 serves as a coordination point for pyruvate.

The protein belongs to the DapA family. In terms of assembly, homotetramer; dimer of dimers.

It localises to the cytoplasm. The enzyme catalyses L-aspartate 4-semialdehyde + pyruvate = (2S,4S)-4-hydroxy-2,3,4,5-tetrahydrodipicolinate + H2O + H(+). It participates in amino-acid biosynthesis; L-lysine biosynthesis via DAP pathway; (S)-tetrahydrodipicolinate from L-aspartate: step 3/4. In terms of biological role, catalyzes the condensation of (S)-aspartate-beta-semialdehyde [(S)-ASA] and pyruvate to 4-hydroxy-tetrahydrodipicolinate (HTPA). The sequence is that of 4-hydroxy-tetrahydrodipicolinate synthase from Helicobacter acinonychis (strain Sheeba).